The chain runs to 523 residues: 3-hydroxybenzoate--CoA ligase (523 aa).

Belongs to the ATP-dependent AMP-binding enzyme family. Benzoate-CoA ligase subfamily.

It carries out the reaction 3-hydroxybenzoate + ATP + CoA = 3-hydroxybenzoyl-CoA + AMP + diphosphate. The catalysed reaction is 4-hydroxybenzoate + ATP + CoA = 4-hydroxybenzoyl-CoA + AMP + diphosphate. Its function is as follows. Ligase involved in the anaerobic degradation of 3-hydroxybenzoate (3OHBz). Catalyzes the activation of 3-hydroxybenzoate to 3-hydroxybenzoyl-CoA. Also shows high activity with protocatechuate and 4-hydroxybenzoate. Exhibits lower activity with benzoate, but cannot use 2-hydroxybenzoate or benzoate analogs containing other substituents at the ortho position, such as 2-aminobenzoate (anthranilate). The protein is 3-hydroxybenzoate--CoA ligase of Aromatoleum sp. (strain CIB) (Azoarcus sp. (strain CIB)).